Reading from the N-terminus, the 349-residue chain is Ribosome production factor 1 (349 aa).

Residues Met-1 to Ile-105 form a disordered region. Basic and acidic residues predominate over residues Lys-87–Pro-97. Residues Pro-142–Asp-325 enclose the Brix domain. Positions Val-303–Gln-320 are RNA-binding.

The protein localises to the nucleus. Its subcellular location is the nucleolus. Its function is as follows. May be required for ribosome biogenesis. The polypeptide is Ribosome production factor 1 (RPF1) (Pongo abelii (Sumatran orangutan)).